A 540-amino-acid polypeptide reads, in one-letter code: Glucose-6-phosphate isomerase (540 aa).

The active-site Proton donor is glutamate 346. Catalysis depends on residues histidine 377 and lysine 505.

It belongs to the GPI family.

The protein resides in the cytoplasm. The enzyme catalyses alpha-D-glucose 6-phosphate = beta-D-fructose 6-phosphate. Its pathway is carbohydrate biosynthesis; gluconeogenesis. It functions in the pathway carbohydrate degradation; glycolysis; D-glyceraldehyde 3-phosphate and glycerone phosphate from D-glucose: step 2/4. Its function is as follows. Catalyzes the reversible isomerization of glucose-6-phosphate to fructose-6-phosphate. The sequence is that of Glucose-6-phosphate isomerase from Francisella tularensis subsp. mediasiatica (strain FSC147).